The following is a 680-amino-acid chain: Leucine-rich repeat protein soc-2 homolog (680 aa).

The segment covering 1-19 (MNLCSSGATASTTSLSSTG) has biased composition (low complexity). 2 disordered regions span residues 1 to 54 (MNLC…SDVS) and 73 to 149 (TGTE…PIQA). Positions 26-49 (GVPGGGAEGGGGGGGSGNSGGGGK) are enriched in gly residues. Residues 73–86 (TGTEELSNANSPAN) are compositionally biased toward low complexity. Residues 87–96 (GAGGASGSTG) show a composition bias toward gly residues. A compositionally biased stretch (low complexity) spans 97-106 (SGQQPTGSNG). LRR repeat units lie at residues 161 to 182 (RIKR…VKEC), 184 to 205 (HLTE…IGCL), 207 to 228 (SLRN…LQNC), 230 to 251 (QLKV…IYRL), 253 to 274 (SLTT…LRQL), 276 to 297 (NLTM…IGAL), 299 to 320 (NLTT…IGNC), 322 to 343 (NLSA…IGNL), 345 to 367 (SLVR…KNCK), 368 to 389 (SMDE…MLAS), 392 to 413 (GLTT…GPAQ), 416 to 437 (NVYS…IFSR), 440 to 461 (GLTK…IGTW), 463 to 484 (NMVE…IMNL), 486 to 507 (NLEI…IGNL), 509 to 530 (RLRI…IGLL), 532 to 553 (ELQR…IGHL), 555 to 576 (NLTH…IGSL), 578 to 600 (SLEN…LALC), and 602 to 623 (NLKY…IQAG). A compositionally biased stretch (gly residues) spans 658-668 (AGGNGGGGAAA). The segment at 658 to 680 (AGGNGGGGAAAAGGSASRSSDRR) is disordered. The span at 669 to 680 (AGGSASRSSDRR) shows a compositional bias: low complexity.

It belongs to the SHOC2 family.

Acts as a Ras effector and participates in MAPK pathway activation. Probably acts as a regulatory subunit of protein phosphatase that specifically dephosphorylates Raf kinase and stimulate Raf activity at specialized signaling complexes upon Ras activation. In Drosophila simulans (Fruit fly), this protein is Leucine-rich repeat protein soc-2 homolog (Sur-8).